A 326-amino-acid polypeptide reads, in one-letter code: MDIKPKKYKPTKEEYIKSFKDMLLLRRFEEKCGQLYGMGEIGGFCHLYIGQEAVISAVDTVKQKGDSTITSYRDHAHIILAGTEPKYVLAELMGRATGCSKGKGGSMHLFDIPNKFYGGHGIVGAQVPIGTGLAFAEKYNGTNNICFTFLGDGAVNQGQVYEAFNMAALWGLPVVYIIENNEYSMGTSVARSTFMRDLYKKGESFGIKGFQLDGMDFEEMYNGAKQAAEYVRENSFPLILEVKTYRYRGHSMSDPAKYRSKEEVEQYKERDPLVIIRKTILDNKYATEADLKEIEQSVKEIVKEAVKFSENSPLPDEGELYTEVYC.

Heterodimer of an alpha and a beta chain. Requires thiamine diphosphate as cofactor.

It carries out the reaction N(6)-[(R)-lipoyl]-L-lysyl-[protein] + pyruvate + H(+) = N(6)-[(R)-S(8)-acetyldihydrolipoyl]-L-lysyl-[protein] + CO2. The pyruvate dehydrogenase complex catalyzes the overall conversion of pyruvate to acetyl-CoA and CO(2). It contains multiple copies of three enzymatic components: pyruvate dehydrogenase (E1), dihydrolipoamide acetyltransferase (E2) and lipoamide dehydrogenase (E3). The chain is Pyruvate dehydrogenase E1 component subunit alpha (pdhA) from Rickettsia felis (strain ATCC VR-1525 / URRWXCal2) (Rickettsia azadi).